The chain runs to 625 residues: Protein LEO1 homolog (625 aa).

2 disordered regions span residues 1–214 (MVKG…DMVL) and 415–625 (EREK…SDED). Acidic residues-rich tracts occupy residues 40-55 (DEAEGGVEPEGEGEAE) and 63-80 (EAESDGEQGDVELDPGES). 3 stretches are compositionally biased toward basic and acidic residues: residues 97–113 (SEARDSDSDNKEEEHGG), 121–137 (QEVVESGSERSGEKHYE), and 182–197 (EYVRNDVEQDEHRSPI). Ser203 is subject to Phosphoserine. Residues 415–425 (EREKEKREKAE) are compositionally biased toward basic and acidic residues. The stretch at 415 to 539 (EREKEKREKA…ETEEEEEEKS (125 aa)) forms a coiled coil. Residues 426 to 436 (SQNLKASTKLS) are compositionally biased toward polar residues. The segment covering 471-491 (YRSNRGYEEDLEAEAQRERRI) has biased composition (basic and acidic residues). Basic residues predominate over residues 492-501 (LNAKKSHKGI). A compositionally biased stretch (acidic residues) spans 523–537 (EREESEYETEEEEEE). The segment covering 538–547 (KSPARGRGKD) has biased composition (basic and acidic residues). Ser548, Ser570, Ser600, Ser605, and Ser622 each carry phosphoserine. Over residues 548–561 (SEDEYEEDAEEDEE) the composition is skewed to acidic residues.

The protein belongs to the LEO1 family. Component of the nuclear PAF1 complex (PAF1C), which consists of VIP2/ELF7/PAF1, VIP3/SKI8/WDR61, VIP4/LEO1, VIP5/RTF1, VIP6/ELF8/CTR9 and CDC73. Interacts with VIP3 and VIP6. Expressed in roots, shoot apices, stems, cauline leaves, inflorescence apices and flowers.

Its subcellular location is the nucleus. Component of the PAF1 complex (PAF1C) which is involved in histone modifications such as methylation on histone H3 'Lys-4' (H3K4me3). Involved in regulation of flowering time. Required for the expression of the flowering repressor and MADS box gene FLC. Involved in the control of seed dormancy and germination. This chain is Protein LEO1 homolog, found in Arabidopsis thaliana (Mouse-ear cress).